The primary structure comprises 140 residues: Large ribosomal subunit protein uL13 (140 aa).

Belongs to the universal ribosomal protein uL13 family. Part of the 50S ribosomal subunit.

Its function is as follows. This protein is one of the early assembly proteins of the 50S ribosomal subunit, although it is not seen to bind rRNA by itself. It is important during the early stages of 50S assembly. In Methanosarcina barkeri (strain Fusaro / DSM 804), this protein is Large ribosomal subunit protein uL13.